The following is a 106-amino-acid chain: ATP-dependent Clp protease adapter protein ClpS (106 aa).

This sequence belongs to the ClpS family. As to quaternary structure, binds to the N-terminal domain of the chaperone ClpA.

Its function is as follows. Involved in the modulation of the specificity of the ClpAP-mediated ATP-dependent protein degradation. In Citrobacter koseri (strain ATCC BAA-895 / CDC 4225-83 / SGSC4696), this protein is ATP-dependent Clp protease adapter protein ClpS.